The primary structure comprises 411 residues: Lissencephaly-1 homolog (411 aa).

In terms of domain architecture, LisH spans 7–39; sequence QREELNKAIADYLASNGFMEALESFKKETDMPG. Residues 54–80 are a coiled coil; that stretch reads TSVIRLQKKVMDLEGRLAEAEKEYISG. Over residues 77–89 the composition is skewed to basic and acidic residues; that stretch reads YISGTPSREKRSP. Residues 77–96 are disordered; it reads YISGTPSREKRSPTEWIPRP. WD repeat units lie at residues 104–145, 146–187, 188–227, 230–269, 272–334, 337–376, and 379–411; these read GHRA…RTIK, GHTD…RTMH, GHDH…CVRT, GHRD…CKLE, EHDH…ALFT, GHDN…CCKT, and AHSH…WECR.

This sequence belongs to the WD repeat LIS1/nudF family.

It localises to the cytoplasm. The protein localises to the cytoskeleton. It is found in the microtubule organizing center. Its subcellular location is the centrosome. Functionally, positively regulates the activity of the minus-end directed microtubule motor protein dynein. May enhance dynein-mediated microtubule sliding by targeting dynein to the microtubule plus end. Required for several dynein- and microtubule-dependent processes. The protein is Lissencephaly-1 homolog of Ixodes scapularis (Black-legged tick).